A 386-amino-acid chain; its full sequence is Homogentisate solanesyltransferase, chloroplastic (386 aa).

The N-terminal 69 residues, 1 to 69 (MELSISQSPR…STNYRKISIR (69 aa)), are a transit peptide targeting the chloroplast. A run of 8 helical transmembrane segments spans residues 130-150 (VLKA…IVGI), 181-201 (LVIF…GPFI), 204-220 (LYSL…VPPL), 225-245 (FPVA…NFGV), 259-279 (WSAP…VIAI), 306-326 (IAFL…SLAF), 335-355 (SLMI…TWVL), and 365-385 (ISGY…LFPF).

Belongs to the UbiA prenyltransferase family.

It is found in the plastid. It localises to the chloroplast membrane. It carries out the reaction all-trans-nonaprenyl diphosphate + homogentisate + H(+) = 2-methyl-6-(all-trans-nonaprenyl)benzene-1,4-diol + CO2 + diphosphate. With respect to regulation, inhibited by haloxydine (3,5-dichloro-2,6-difluoro-4-haloxypyridine). Involved in the synthesis of plastoquinone-9. Can use both homogentisic acid and 2,5-dihydroxyphenylacetic acid gamma-lactone as prenyl acceptors, and solanesyl diphosphate &gt; farnesyl diphosphate &gt; geranylgeranyl diphosphate &gt;&gt; phytyl diphosphate as prenyl donors. Do not catalyze the decardoxylation of homogentisate uncoupled from prenylation. The polypeptide is Homogentisate solanesyltransferase, chloroplastic (HST) (Arabidopsis thaliana (Mouse-ear cress)).